A 221-amino-acid polypeptide reads, in one-letter code: Transcription factor otaR1 (221 aa).

The interval 109-146 (ASRSRPAFSTPASRPGLSSAKSPSLGATSPGSMDRSEE) is disordered. Positions 127–139 (SAKSPSLGATSPG) are enriched in polar residues. The interval 152 to 192 (KKYHEKYKERNRLAAGRSRQKQADLINLLQAEQQEEERRRK) is basic motif. The bZIP domain maps to 152–215 (KKYHEKYKER…VDMKQELQHH (64 aa)). The leucine-zipper stretch occupies residues 198 to 212 (IANMQKELVDMKQEL).

It is found in the nucleus. In terms of biological role, transcription factor; part of the gene cluster that mediates the biosynthesis of ochratoxin A (OTA), a mycotoxin demonstrated to have nephrotoxic, immunotoxic, genotoxic, neurotoxic, and teratogenic properties. Positively regulates the expression of the OTA biosynthetic genes and subsequent production of OTA. Probably binds to conserved 5'-ACGT-3' bZIP binding motifs found in multiple copies (3 to 4) in the promoters of the OTA biosynthetic genes. Acts not only as a pathway-specific regulator of the OTA cluster but also binds at other chromosomal positions outside the OTA cluster and can act as a broad regulator. Negatively regulates pathogenicity and plays a critical role in tolerance to reactive oxygen species (ROS). In Aspergillus niger (strain ATCC MYA-4892 / CBS 513.88 / FGSC A1513), this protein is Transcription factor otaR1.